A 247-amino-acid polypeptide reads, in one-letter code: ATP synthase subunit a, chloroplastic (247 aa).

5 helical membrane-spanning segments follow: residues 38 to 58 (QVLITSWFVITILLGSVIIAV), 95 to 115 (VPFIGTMFLFIFVSNWSGALL), 134 to 154 (INTTVALALLTSAAYFYAGLS), 199 to 219 (LVVVVLVSLVPLVVPIPVMFL), and 220 to 240 (GLFTSGIQALIFATLAAAYIG).

This sequence belongs to the ATPase A chain family. F-type ATPases have 2 components, CF(1) - the catalytic core - and CF(0) - the membrane proton channel. CF(1) has five subunits: alpha(3), beta(3), gamma(1), delta(1), epsilon(1). CF(0) has four main subunits: a, b, b' and c.

The protein localises to the plastid. The protein resides in the chloroplast thylakoid membrane. Its function is as follows. Key component of the proton channel; it plays a direct role in the translocation of protons across the membrane. The polypeptide is ATP synthase subunit a, chloroplastic (Sorghum bicolor (Sorghum)).